We begin with the raw amino-acid sequence, 264 residues long: Acetyl-coenzyme A carboxylase carboxyl transferase subunit beta (264 aa).

The region spanning 4–264 is the CoA carboxyltransferase N-terminal domain; it reads LWVKCKQCQQ…CGNSLEGVES (261 aa). Cys8, Cys11, Cys27, and Cys29 together coordinate Zn(2+). A C4-type zinc finger spans residues 8–29; the sequence is CKQCQQILLTKELEKNLKVCRC.

The protein belongs to the AccD/PCCB family. As to quaternary structure, acetyl-CoA carboxylase is a heterohexamer composed of biotin carboxyl carrier protein (AccB), biotin carboxylase (AccC) and two subunits each of ACCase subunit alpha (AccA) and ACCase subunit beta (AccD). Zn(2+) serves as cofactor.

The protein resides in the cytoplasm. The catalysed reaction is N(6)-carboxybiotinyl-L-lysyl-[protein] + acetyl-CoA = N(6)-biotinyl-L-lysyl-[protein] + malonyl-CoA. The protein operates within lipid metabolism; malonyl-CoA biosynthesis; malonyl-CoA from acetyl-CoA: step 1/1. Functionally, component of the acetyl coenzyme A carboxylase (ACC) complex. Biotin carboxylase (BC) catalyzes the carboxylation of biotin on its carrier protein (BCCP) and then the CO(2) group is transferred by the transcarboxylase to acetyl-CoA to form malonyl-CoA. The protein is Acetyl-coenzyme A carboxylase carboxyl transferase subunit beta of Heliobacterium modesticaldum (strain ATCC 51547 / Ice1).